The sequence spans 94 residues: C-C motif chemokine 17 (94 aa).

Positions 1–23 (MAPLKMLALVTLLLGASLQHIHA) are cleaved as a signal peptide. 2 cysteine pairs are disulfide-bonded: C33-C57 and C34-C73.

The protein belongs to the intercrine beta (chemokine CC) family. Constitutively expressed in thymus. Detected at lower levels in the lung, colon and small intestine. Expressed in stimulated peripheral blood mononuclear cells, but not in resting cells.

The protein localises to the secreted. Its function is as follows. Chemokine, which displays chemotactic activity for T lymphocytes, preferentially Th2 cells, but not monocytes or granulocytes. Therefore plays an important role in a wide range of inflammatory and immunological processes. Acts by binding to CCR4 at T-cell surface. Mediates GM-CSF/CSF2-driven pain and inflammation. In the brain, required to maintain the typical, highly branched morphology of hippocampal microglia under homeostatic conditions. May be important for the appropriate adaptation of microglial morphology and synaptic plasticity to acute lipopolysaccharide (LPS)-induced neuroinflammation. Plays a role in wound healing, mainly by inducing fibroblast migration into the wound. This is C-C motif chemokine 17 (CCL17) from Homo sapiens (Human).